A 748-amino-acid chain; its full sequence is Acyl-coenzyme A oxidase (748 aa).

Belongs to the acyl-CoA oxidase family. FAD is required as a cofactor.

The protein localises to the peroxisome. It catalyses the reaction a 2,3-saturated acyl-CoA + O2 = a (2E)-enoyl-CoA + H2O2. The protein operates within lipid metabolism; peroxisomal fatty acid beta-oxidation. The protein is Acyl-coenzyme A oxidase (POX1) of Candida glabrata (strain ATCC 2001 / BCRC 20586 / JCM 3761 / NBRC 0622 / NRRL Y-65 / CBS 138) (Yeast).